Here is a 258-residue protein sequence, read N- to C-terminus: Imidazole glycerol phosphate synthase subunit HisF (258 aa).

Residues Asp11 and Asp130 contribute to the active site.

Belongs to the HisA/HisF family. Heterodimer of HisH and HisF.

The protein localises to the cytoplasm. The catalysed reaction is 5-[(5-phospho-1-deoxy-D-ribulos-1-ylimino)methylamino]-1-(5-phospho-beta-D-ribosyl)imidazole-4-carboxamide + L-glutamine = D-erythro-1-(imidazol-4-yl)glycerol 3-phosphate + 5-amino-1-(5-phospho-beta-D-ribosyl)imidazole-4-carboxamide + L-glutamate + H(+). It functions in the pathway amino-acid biosynthesis; L-histidine biosynthesis; L-histidine from 5-phospho-alpha-D-ribose 1-diphosphate: step 5/9. Functionally, IGPS catalyzes the conversion of PRFAR and glutamine to IGP, AICAR and glutamate. The HisF subunit catalyzes the cyclization activity that produces IGP and AICAR from PRFAR using the ammonia provided by the HisH subunit. In Baumannia cicadellinicola subsp. Homalodisca coagulata, this protein is Imidazole glycerol phosphate synthase subunit HisF.